The following is a 138-amino-acid chain: Large ribosomal subunit protein uL16 (138 aa).

The span at 1–13 shows a compositional bias: basic residues; it reads MLQPARRKYRKEQ. The disordered stretch occupies residues 1-22; the sequence is MLQPARRKYRKEQKGRNTGVAT.

The protein belongs to the universal ribosomal protein uL16 family. Part of the 50S ribosomal subunit.

In terms of biological role, binds 23S rRNA and is also seen to make contacts with the A and possibly P site tRNAs. The chain is Large ribosomal subunit protein uL16 from Polaromonas naphthalenivorans (strain CJ2).